We begin with the raw amino-acid sequence, 577 residues long: Torulene dioxygenase (577 aa).

The segment at 1-20 is disordered; the sequence is MALNGPGVYHRTREHEQEDA. Fe(2+) is bound by residues histidine 239, histidine 291, histidine 361, and histidine 570.

Belongs to the carotenoid oxygenase family. Requires Fe(2+) as cofactor.

It is found in the cytoplasm. It localises to the cytosol. The enzyme catalyses torulene + O2 = 4'-apo-beta-carotenal + 3-methyl-2-butenal. Its pathway is carotenoid biosynthesis. Its function is as follows. Torulene dioxygenase; part of pathway that mediates the biosynthesis of neurosporaxanthin, a carboxylic apocarotenoid acting as an essential protective pigments and leading to orange pigmentation. CarT mediates the cleavage of torulene into beta-apo-4'-carotenal, the aldehyde corresponding to the acidic neurosporaxanthin. Is also active on other monocyclic synthetic substrates such as beta-apo-8'-carotenal and beta-apo-10'-carotenal to produce beta-apo-14'-carotenal and retinal(beta-apo-15'-carotenal), respectively. Neurosporaxanthin is synthesized from geranyl-geranyl pyrophosphate (GGPP) through several enzymatic activities. Phytoene synthase activity performed by the bifunctional enzyme carAR first produces phytoene from geranyl-geranyl pyrophosphate (GGPP). The phytoene dehydrogenase carB then introduces 4 desaturations to lead to lycopene which is substrate of the carotene cyclase activity of carAR that leads to the production of gamma-carotene. CarB then performs a 5th desaturation reaction to yield torulene. Torulene is the substrate of the dioxidase carT that breaks the molecule, removing five carbon atoms to yield beta-apo-4'-carotenal, whereas the aldehyde dehydrogenase carD mediates the last step by converting beta-apo-4'-carotenal into neurosporaxanthin. In Gibberella fujikuroi (strain CBS 195.34 / IMI 58289 / NRRL A-6831) (Bakanae and foot rot disease fungus), this protein is Torulene dioxygenase.